A 597-amino-acid chain; its full sequence is Arginine--tRNA ligase (597 aa).

Positions 137 to 147 (PNIAKEMHVGH) match the 'HIGH' region motif.

Belongs to the class-I aminoacyl-tRNA synthetase family. Monomer.

It is found in the cytoplasm. It carries out the reaction tRNA(Arg) + L-arginine + ATP = L-arginyl-tRNA(Arg) + AMP + diphosphate. The sequence is that of Arginine--tRNA ligase from Parasynechococcus marenigrum (strain WH8102).